We begin with the raw amino-acid sequence, 110 residues long: UPF0060 membrane protein Rpal_4363 (110 aa).

4 consecutive transmembrane segments (helical) span residues 4-24 (LLTF…FWAW), 31-51 (PLWL…LTLA), 59-79 (AYAA…WAIE), and 88-108 (VIGA…PRAL).

The protein belongs to the UPF0060 family.

The protein resides in the cell inner membrane. The chain is UPF0060 membrane protein Rpal_4363 from Rhodopseudomonas palustris (strain TIE-1).